The sequence spans 63 residues: Large ribosomal subunit protein uL29 (63 aa).

It belongs to the universal ribosomal protein uL29 family.

This chain is Large ribosomal subunit protein uL29, found in Haemophilus influenzae (strain 86-028NP).